The primary structure comprises 536 residues: Mitogen-activated protein kinase kinase kinase mom-4 (536 aa).

Residues 1 to 20 (MDNSSQSKPSSSSSSHSPSP) show a composition bias toward low complexity. The segment at 1-34 (MDNSSQSKPSSSSSSHSPSPAAITPTQRTTRDSG) is disordered. Positions 51 to 305 (NLNSHYLGKG…SSECVEYFTL (255 aa)) constitute a Protein kinase domain. ATP-binding positions include 57-65 (LGKGTYGLV) and Lys-84. Residue Asp-176 is the Proton acceptor of the active site. A disordered region spans residues 314–438 (SVPLSDSSTN…EHRRDSNDEE (125 aa)). Polar residues-rich tracts occupy residues 315 to 325 (VPLSDSSTNGP) and 350 to 366 (NNRTPTASKLLNPQQPG). Basic and acidic residues predominate over residues 405 to 438 (KNFRDRAKSEQRQPHRDARPPPPFEHRRDSNDEE).

It belongs to the protein kinase superfamily. STE Ser/Thr protein kinase family. MAP kinase kinase kinase subfamily. As to quaternary structure, interacts with, and is activated by, tap-1. Requires Mg(2+) as cofactor. Post-translationally, may be autophosphorylated.

It catalyses the reaction L-seryl-[protein] + ATP = O-phospho-L-seryl-[protein] + ADP + H(+). The enzyme catalyses L-threonyl-[protein] + ATP = O-phospho-L-threonyl-[protein] + ADP + H(+). Part of the Wnt signaling pathway essential for the specification of the mesodermal cell fate in early embryos. Stimulates the wrm-1/lit-1-dependent phosphorylation of pop-1 and plays a role in the initial nuclear accumulation of wrm-1. The chain is Mitogen-activated protein kinase kinase kinase mom-4 from Caenorhabditis elegans.